Consider the following 128-residue polypeptide: Diacylglycerol kinase (128 aa).

E34 is a binding site for a divalent metal cation. 2 consecutive transmembrane segments (helical) span residues 35 to 55 (SAFR…SYLA) and 58 to 78 (FLEW…ELIN). E75 serves as the catalytic Proton acceptor. E82 contributes to the a divalent metal cation binding site. The chain crosses the membrane as a helical span at residues 107–127 (QLIGLIFWTLIWGRYLLALYL).

The protein belongs to the bacterial diacylglycerol kinase family. It depends on Mg(2+) as a cofactor.

The protein localises to the cell inner membrane. It catalyses the reaction a 1,2-diacyl-sn-glycerol + ATP = a 1,2-diacyl-sn-glycero-3-phosphate + ADP + H(+). In terms of biological role, catalyzes the ATP-dependent phosphorylation of sn-l,2-diacylglycerol (DAG) to phosphatidic acid. Involved in the recycling of diacylglycerol produced as a by-product during membrane-derived oligosaccharide (MDO) biosynthesis. In Helicobacter pylori (strain ATCC 700392 / 26695) (Campylobacter pylori), this protein is Diacylglycerol kinase (dgkA).